The chain runs to 93 residues: WAP four-disulfide core domain protein 13 (93 aa).

Positions 1–22 are cleaved as a signal peptide; sequence MKPVLPLQFLVVFCLALQLVPG. The 50-residue stretch at 24-73 folds into the WAP; atypical domain; sequence PKQRVLKYILEPPPCISAPENCTHLCTMQEDCEKGFQCCSSFCGIVCSSE. Disulfide bonds link C45-C66, C49-C61, and C55-C70.

The protein localises to the secreted. Functionally, putative acid-stable proteinase inhibitor. The protein is WAP four-disulfide core domain protein 13 (WFDC13) of Homo sapiens (Human).